The sequence spans 443 residues: ATP-dependent protease ATPase subunit HslU (443 aa).

ATP-binding positions include I18, 60 to 65 (GVGKTE), D256, E321, and R393.

Belongs to the ClpX chaperone family. HslU subfamily. In terms of assembly, a double ring-shaped homohexamer of HslV is capped on each side by a ring-shaped HslU homohexamer. The assembly of the HslU/HslV complex is dependent on binding of ATP.

Its subcellular location is the cytoplasm. In terms of biological role, ATPase subunit of a proteasome-like degradation complex; this subunit has chaperone activity. The binding of ATP and its subsequent hydrolysis by HslU are essential for unfolding of protein substrates subsequently hydrolyzed by HslV. HslU recognizes the N-terminal part of its protein substrates and unfolds these before they are guided to HslV for hydrolysis. The chain is ATP-dependent protease ATPase subunit HslU from Wigglesworthia glossinidia brevipalpis.